Reading from the N-terminus, the 136-residue chain is Galectin-7 (136 aa).

Positions 6–136 (HKTSLPQGVR…DVQLHSLNIF (131 aa)) constitute a Galectin domain. An a beta-D-galactoside-binding site is contributed by 70–76 (WGREERG).

As to quaternary structure, monomer.

It is found in the cytoplasm. Its subcellular location is the nucleus. The protein localises to the secreted. In terms of biological role, could be involved in cell-cell and/or cell-matrix interactions necessary for normal growth control. Pro-apoptotic protein that functions intracellularly upstream of JNK activation and cytochrome c release. The protein is Galectin-7 (Lgals7) of Mus musculus (Mouse).